Consider the following 275-residue polypeptide: Shikimate dehydrogenase (NADP(+)) (275 aa).

Residues 19–21 and Thr-66 each bind shikimate; that span reads SKS. Lys-70 serves as the catalytic Proton acceptor. Glu-82 serves as a coordination point for NADP(+). 2 residues coordinate shikimate: Asn-91 and Asp-106. Residues 130–134, 154–159, and Met-217 contribute to the NADP(+) site; these read GAGGA and NRTASK. Tyr-219 contacts shikimate. Position 241 (Gly-241) interacts with NADP(+).

It belongs to the shikimate dehydrogenase family. As to quaternary structure, homodimer.

The catalysed reaction is shikimate + NADP(+) = 3-dehydroshikimate + NADPH + H(+). It functions in the pathway metabolic intermediate biosynthesis; chorismate biosynthesis; chorismate from D-erythrose 4-phosphate and phosphoenolpyruvate: step 4/7. Its function is as follows. Involved in the biosynthesis of the chorismate, which leads to the biosynthesis of aromatic amino acids. Catalyzes the reversible NADPH linked reduction of 3-dehydroshikimate (DHSA) to yield shikimate (SA). This chain is Shikimate dehydrogenase (NADP(+)), found in Colwellia psychrerythraea (strain 34H / ATCC BAA-681) (Vibrio psychroerythus).